The following is a 111-amino-acid chain: Class I hydrophobin 10 (111 aa).

The N-terminal stretch at 1 to 17 (MLFNTFVVTALASLAAA) is a signal peptide. 4 cysteine pairs are disulfide-bonded: C30–C90, C37–C84, C38–C71, and C91–C104.

This sequence belongs to the fungal hydrophobin family. In terms of assembly, self-assembles to form functional amyloid fibrils called rodlets. Self-assembly into fibrillar rodlets occurs spontaneously at hydrophobic:hydrophilic interfaces and the rodlets further associate laterally to form amphipathic monolayers.

It localises to the secreted. The protein resides in the cell wall. Functionally, aerial growth, conidiation, and dispersal of filamentous fungi in the environment rely upon a capability of their secreting small amphipathic proteins called hydrophobins (HPBs) with low sequence identity. Class I can self-assemble into an outermost layer of rodlet bundles on aerial cell surfaces, conferring cellular hydrophobicity that supports fungal growth, development and dispersal; whereas Class II form highly ordered films at water-air interfaces through intermolecular interactions but contribute nothing to the rodlet structure. The protein is Class I hydrophobin 10 of Pleurotus ostreatus (strain PC15) (Oyster mushroom).